A 290-amino-acid chain; its full sequence is Agroclavine dehydrogenase (290 aa).

The protein belongs to the fgaFS/easG family. Monomer.

The enzyme catalyses agroclavine + NADP(+) = didehydroagroclavine + NADPH + H(+). It participates in alkaloid biosynthesis; ergot alkaloid biosynthesis. In terms of biological role, agroclavine dehydrogenase; part of the gene cluster that mediates the biosynthesis of fungal ergot alkaloid. DmaW catalyzes the first step of ergot alkaloid biosynthesis by condensing dimethylallyl diphosphate (DMAP) and tryptophan to form 4-dimethylallyl-L-tryptophan. The second step is catalyzed by the methyltransferase easF that methylates 4-dimethylallyl-L-tryptophan in the presence of S-adenosyl-L-methionine, resulting in the formation of 4-dimethylallyl-L-abrine. The catalase easC and the FAD-dependent oxidoreductase easE then transform 4-dimethylallyl-L-abrine to chanoclavine-I which is further oxidized by easD in the presence of NAD(+), resulting in the formation of chanoclavine-I aldehyde. Agroclavine dehydrogenase easG then mediates the conversion of chanoclavine-I aldehyde to agroclavine via a non-enzymatic adduct reaction: the substrate is an iminium intermediate that is formed spontaneously from chanoclavine-I aldehyde in the presence of glutathione. The presence of easA is not required to complete this reaction. Further conversion of agroclavine to paspalic acid is a two-step process involving oxidation of agroclavine to elymoclavine and of elymoclavine to paspalic acid, the second step being performed by the elymoclavine oxidase cloA. Paspalic acid is then further converted to D-lysergic acid. Ergopeptines are assembled from D-lysergic acid and three different amino acids by the D-lysergyl-peptide-synthetases composed each of a monomudular and a trimodular nonribosomal peptide synthetase subunit. LpsB and lpsC encode the monomodular subunits responsible for D-lysergic acid activation and incorporation into the ergopeptine backbone. LpsA1 and A2 subunits encode the trimodular nonribosomal peptide synthetase assembling the tripeptide portion of ergopeptines. LpsA1 is responsible for formation of the major ergopeptine, ergotamine, and lpsA2 for alpha-ergocryptine, the minor ergopeptine of the total alkaloid mixture elaborated by C.purpurea. D-lysergyl-tripeptides are assembled by the nonribosomal peptide synthetases and released as N-(D-lysergyl-aminoacyl)-lactams. Cyclolization of the D-lysergyl-tripeptides is performed by the Fe(2+)/2-ketoglutarate-dependent dioxygenase easH which introduces a hydroxyl group into N-(D-lysergyl-aminoacyl)-lactam at alpha-C of the aminoacyl residue followed by spontaneous condensation with the terminal lactam carbonyl group. This is Agroclavine dehydrogenase from Claviceps purpurea (strain 20.1) (Ergot fungus).